Here is a 620-residue protein sequence, read N- to C-terminus: Pentatricopeptide repeat-containing protein At5g66520 (620 aa).

10 PPR repeats span residues 79-113 (DTFL…SAPH), 114-148 (NAYT…GYEN), 149-179 (DVYA…IPEP), 180-210 (DDVS…MAEK), 211-245 (NAIS…DVEP), 246-280 (DNVS…RIRM), 281-311 (DSVL…IKKK), 312-346 (SVQA…GIKP), 347-382 (NVIT…NLKP), and 383-413 (TIEH…MPLK). The segment at 418-493 (IWGALLKACR…VPGCSTISLE (76 aa)) is type E motif. The segment at 494-524 (GTTHEFLAGDRSHPEIEKIQSKWRIMRRKLE) is type E(+) motif. Residues 525–620 (ENGYVPELEE…DGKCSCGDYW (96 aa)) are type DYW motif.

The protein belongs to the PPR family. PCMP-H subfamily.

The chain is Pentatricopeptide repeat-containing protein At5g66520 (PCMP-H61) from Arabidopsis thaliana (Mouse-ear cress).